A 436-amino-acid polypeptide reads, in one-letter code: Tol-Pal system protein TolB (436 aa).

The N-terminal stretch at 1–28 (MMKCSFFRAILVAVGLMAAAVVATPANA) is a signal peptide.

Belongs to the TolB family. As to quaternary structure, the Tol-Pal system is composed of five core proteins: the inner membrane proteins TolA, TolQ and TolR, the periplasmic protein TolB and the outer membrane protein Pal. They form a network linking the inner and outer membranes and the peptidoglycan layer.

It is found in the periplasm. Part of the Tol-Pal system, which plays a role in outer membrane invagination during cell division and is important for maintaining outer membrane integrity. The chain is Tol-Pal system protein TolB from Rhizobium etli (strain CIAT 652).